The following is a 320-amino-acid chain: Meso-diaminopimelate D-dehydrogenase (320 aa).

Residues 11–14 (YGNL), 35–37 (SRR), 65–68 (CMGS), 88–90 (TYD), and 117–121 (TGWDP) each bind NADP(+). Residues D90, D120, W144, 150–151 (QG), T169, R195, H244, and N270 contribute to the substrate site.

As to quaternary structure, homodimer.

It carries out the reaction meso-2,6-diaminopimelate + NADP(+) + H2O = (S)-2-amino-6-oxoheptanedioate + NH4(+) + NADPH + H(+). It participates in amino-acid biosynthesis; L-lysine biosynthesis via DAP pathway; DL-2,6-diaminopimelate from (S)-tetrahydrodipicolinate: step 1/1. L,L-2,6-diaminopimelate and D,D-2,6-diaminopimelate competitively inhibit the oxidative deamination of meso-2,6-diaminopimelate. The enzyme is also inhibited by L-cysteine, and by p-chloromercuribenzoate, iodoacetic acid and HgCl(2) in vitro. Its function is as follows. Catalyzes the reversible NADPH-dependent reductive amination of L-2-amino-6-oxopimelate, the acyclic form of L-tetrahydrodipicolinate, to generate the meso compound, D,L-2,6-diaminopimelate. Probably plays a role in lysine biosynthesis. Exhibits a high substrate specificity for meso-2,6-diaminopimelate, since L,L-2,6-diaminopimelate, D,D-2,6-diaminopimelate, L-glutamate, L-alanine, L-leucine, L-valine, L-aspartate, L-threonine, L-homoserine, L-methionine, L-lysine, L-serine, L-phenylalanine, L-tyrosine, L-tryptophan, L-ornithine, L-histidine, L-arginine, D-glutamate, and D-alanine are not substrates for the oxidative deamination reaction. Can use NAD(+) only poorly since the activity observed in the presence of NAD(+) is about 3% of that with NADP(+). In Corynebacterium glutamicum (strain ATCC 13032 / DSM 20300 / JCM 1318 / BCRC 11384 / CCUG 27702 / LMG 3730 / NBRC 12168 / NCIMB 10025 / NRRL B-2784 / 534), this protein is Meso-diaminopimelate D-dehydrogenase (ddh).